The primary structure comprises 62 residues: UPF0337 protein XCC0070 (62 aa).

The tract at residues 32–62 (LEGAAEKNIGKVQRKAGELADDVRDATKSTR) is disordered.

This sequence belongs to the UPF0337 (CsbD) family.

The polypeptide is UPF0337 protein XCC0070 (Xanthomonas campestris pv. campestris (strain ATCC 33913 / DSM 3586 / NCPPB 528 / LMG 568 / P 25)).